We begin with the raw amino-acid sequence, 122 residues long: MTKEQIIEAVKNMTVLELNELVKAIEEEFGVTAAAPVVVAGGAAAGAEAAAEKTEFDVILADAGAQKIKVIKVVREITGLGLKEAKDLVDNTPKPIKEGIAKEEAEEIKAALEEAGAKVEIK.

It belongs to the bacterial ribosomal protein bL12 family. In terms of assembly, homodimer. Part of the 50S ribosomal subunit; present in 4 copies per ribosome. Forms part of the ribosomal stalk which helps the ribosome interact with GTP-bound translation factors. Forms a pentameric L10(L12)2(L12)2 complex, where L10 forms an elongated spine to which 2 L12 dimers bind in a sequential fashion.

Its function is as follows. Forms part of the ribosomal stalk which helps the ribosome interact with GTP-bound translation factors. Is thus essential for accurate translation. This Geobacillus stearothermophilus (Bacillus stearothermophilus) protein is Large ribosomal subunit protein bL12.